We begin with the raw amino-acid sequence, 302 residues long: ATP synthase subunit a (302 aa).

7 consecutive transmembrane segments (helical) span residues Val-61–Gly-81, Ile-119–Ile-139, Phe-148–Val-168, Asp-172–Ile-192, Pro-214–Ala-234, Phe-252–Trp-272, and Ala-273–Val-293.

The protein belongs to the ATPase A chain family. As to quaternary structure, F-type ATPases have 2 components, CF(1) - the catalytic core - and CF(0) - the membrane proton channel. CF(1) has five subunits: alpha(3), beta(3), gamma(1), delta(1), epsilon(1). CF(0) has three main subunits: a(1), b(2) and c(9-12). The alpha and beta chains form an alternating ring which encloses part of the gamma chain. CF(1) is attached to CF(0) by a central stalk formed by the gamma and epsilon chains, while a peripheral stalk is formed by the delta and b chains.

The protein resides in the cell inner membrane. Its function is as follows. Key component of the proton channel; it plays a direct role in the translocation of protons across the membrane. This is ATP synthase subunit a from Alcanivorax borkumensis (strain ATCC 700651 / DSM 11573 / NCIMB 13689 / SK2).